Here is a 74-residue protein sequence, read N- to C-terminus: Cyclin-dependent kinases regulatory subunit (74 aa).

Belongs to the CKS family. As to quaternary structure, forms a homohexamer that can probably bind six kinase subunits.

Binds to the catalytic subunit of the cyclin dependent kinases Cdk1 and Cdk2, and is essential for their biological function. This is Cyclin-dependent kinases regulatory subunit (Cks30A) from Drosophila melanogaster (Fruit fly).